The chain runs to 95 residues: Small integral membrane protein 26 (95 aa).

Residues 13–35 (MSVVYGIGTWSVLGSLLYYSRTM) form a helical membrane-spanning segment.

This sequence belongs to the SMIM26 family. Interacts with AGK and SLC25A11. As to expression, detected in kidney (at protein level).

It is found in the mitochondrion outer membrane. In terms of biological role, may play a role in cell viability. The protein is Small integral membrane protein 26 of Homo sapiens (Human).